Consider the following 203-residue polypeptide: Large ribosomal subunit protein bL25 (203 aa).

Belongs to the bacterial ribosomal protein bL25 family. CTC subfamily. In terms of assembly, part of the 50S ribosomal subunit; part of the 5S rRNA/L5/L18/L25 subcomplex. Contacts the 5S rRNA. Binds to the 5S rRNA independently of L5 and L18.

In terms of biological role, this is one of the proteins that binds to the 5S RNA in the ribosome where it forms part of the central protuberance. In Cupriavidus metallidurans (strain ATCC 43123 / DSM 2839 / NBRC 102507 / CH34) (Ralstonia metallidurans), this protein is Large ribosomal subunit protein bL25.